The primary structure comprises 504 residues: Maturase K (504 aa).

Belongs to the intron maturase 2 family. MatK subfamily.

It is found in the plastid. The protein localises to the chloroplast. Functionally, usually encoded in the trnK tRNA gene intron. Probably assists in splicing its own and other chloroplast group II introns. This is Maturase K from Nepenthes gracilis (Slender pitcher plant).